The following is a 51-amino-acid chain: Sperm protamine P1 (51 aa).

It belongs to the protamine P1 family. In terms of assembly, cross-linked by interchain disulfide bonds around the DNA-helix. As to expression, testis.

The protein resides in the nucleus. It localises to the chromosome. Protamines substitute for histones in the chromatin of sperm during the haploid phase of spermatogenesis. They compact sperm DNA into a highly condensed, stable and inactive complex. This Hylobates lar (Lar gibbon) protein is Sperm protamine P1 (PRM1).